We begin with the raw amino-acid sequence, 71 residues long: General transcription factor IIH subunit 5 (71 aa).

At Thr69 the chain carries Phosphothreonine.

Belongs to the TFB5 family. As to quaternary structure, component of the 7-subunit TFIIH core complex composed of XPB/ERCC3, XPD/ERCC2, GTF2H1, GTF2H2, GTF2H3, GTF2H4 and GTF2H5, which is active in NER. The core complex associates with the 3-subunit CDK-activating kinase (CAK) module composed of CCNH/cyclin H, CDK7 and MNAT1 to form the 10-subunit holoenzyme (holo-TFIIH) active in transcription. Part of TBP-based Pol II pre-initiation complex (PIC), in which Pol II core assembles with general transcription factors and other specific initiation factors including GTF2E1, GTF2E2, GTF2F1, GTF2F2, TCEA1, ERCC2, ERCC3, GTF2H2, GTF2H3, GTF2H4, GTF2H5, GTF2A1, GTF2A2, GTF2B and TBP; this large multi-subunit PIC complex mediates DNA unwinding and targets Pol II core to the transcription start site where the first phosphodiester bond forms.

It is found in the nucleus. Its subcellular location is the cytoplasm. Functionally, component of the general transcription and DNA repair factor IIH (TFIIH) core complex, which is involved in general and transcription-coupled nucleotide excision repair (NER) of damaged DNA and, when complexed to CAK, in RNA transcription by RNA polymerase II. In NER, TFIIH acts by opening DNA around the lesion to allow the excision of the damaged oligonucleotide and its replacement by a new DNA fragment. In transcription, TFIIH has an essential role in transcription initiation. When the pre-initiation complex (PIC) has been established, TFIIH is required for promoter opening and promoter escape. Phosphorylation of the C-terminal tail (CTD) of the largest subunit of RNA polymerase II by the kinase module CAK controls the initiation of transcription. Necessary for the stability of the TFIIH complex and for the presence of normal levels of TFIIH in the cell. In Homo sapiens (Human), this protein is General transcription factor IIH subunit 5.